We begin with the raw amino-acid sequence, 49 residues long: MRVGVTLACTECKRRNYTTAKNKKNDPNRIELKKYCKWCHTHTVHKETR.

It belongs to the bacterial ribosomal protein bL33 family.

The protein is Large ribosomal subunit protein bL33 of Desulforamulus reducens (strain ATCC BAA-1160 / DSM 100696 / MI-1) (Desulfotomaculum reducens).